Reading from the N-terminus, the 60-residue chain is MPIVCFDPPYELYLHWPLAGEVQSQYWGTGDRGISGAHWPAPGSLREAVSEKKKIIKKDT.

This chain is Putative per-hexamer repeat protein 1 (Phxr1), found in Mus musculus (Mouse).